The sequence spans 541 residues: uncharacterized protein (541 aa).

12 helical membrane passes run 99-119, 131-153, 165-185, 187-207, 224-244, 256-276, 325-345, 367-387, 409-429, 439-459, 472-494, and 508-528; these read WIVVVQISLIAFVVTFGSSVY, GVSISVSSLGSCVFLVGFGFGSL, FVVYFCTLLMFTLFQIGGGCA, NIWTLVILRFFQGFFGSTPLS, YVLPGFCTFPFLGPIFGPIIG, WVFWINMIMGAVVIVIIFFFM, LLITEPIVVCFTLYLTVVYII, IGLSFIGIGIGIVLAGACTPI, LYPLFFGSIMLPISMFWFAWT, WIVPLISSIFFGWSLLFVFFV, AASALAAATLVRYAASGGMSLVG, and SLLGFISVGMIPIPFLFFIYG.

The protein belongs to the major facilitator superfamily. CAR1 family.

Its subcellular location is the membrane. This is an uncharacterized protein from Schizosaccharomyces pombe (strain 972 / ATCC 24843) (Fission yeast).